We begin with the raw amino-acid sequence, 955 residues long: 2-oxoglutarate dehydrogenase E1 component (955 aa).

Belongs to the alpha-ketoglutarate dehydrogenase family. Homodimer. Part of the 2-oxoglutarate dehydrogenase (OGDH) complex composed of E1 (2-oxoglutarate dehydrogenase), E2 (dihydrolipoamide succinyltransferase) and E3 (dihydrolipoamide dehydrogenase); the complex contains multiple copies of the three enzymatic components (E1, E2 and E3). Thiamine diphosphate is required as a cofactor.

It catalyses the reaction N(6)-[(R)-lipoyl]-L-lysyl-[protein] + 2-oxoglutarate + H(+) = N(6)-[(R)-S(8)-succinyldihydrolipoyl]-L-lysyl-[protein] + CO2. Its function is as follows. E1 component of the 2-oxoglutarate dehydrogenase (OGDH) complex which catalyzes the decarboxylation of 2-oxoglutarate, the first step in the conversion of 2-oxoglutarate to succinyl-CoA and CO(2). The protein is 2-oxoglutarate dehydrogenase E1 component of Bacillus cereus (strain B4264).